Reading from the N-terminus, the 365-residue chain is Autoinducer 2-binding periplasmic protein LuxP (365 aa).

The first 23 residues, 1-23 (MKKALLFSLISMVGFSPASQATQ), serve as a signal peptide directing secretion.

This sequence belongs to the bacterial solute-binding protein 2 family.

The protein resides in the periplasm. In terms of biological role, binds to the signaling molecule autoinducer 2 (AI-2), a furanosyl borate diester, (3a-methyl-5,6-dihydrofuro-[2,3d][1,3,2]dioxaborole-2,2,6,6a-tetraol). This complex then interacts with the LuxQ sensor protein. The polypeptide is Autoinducer 2-binding periplasmic protein LuxP (luxP) (Vibrio harveyi (Beneckea harveyi)).